Consider the following 194-residue polypeptide: Inosine triphosphate pyrophosphatase (194 aa).

11 to 16 provides a ligand contact to ITP; that stretch reads TGNAKK. Glu-39 lines the Mg(2+) pocket. Residues Lys-51, 67–68, Lys-84, 143–146, Lys-166, and 171–172 contribute to the ITP site; these read DT, FGWD, and HR.

It belongs to the HAM1 NTPase family. In terms of assembly, homodimer. Requires Mg(2+) as cofactor. The cofactor is Mn(2+).

It localises to the cytoplasm. The catalysed reaction is ITP + H2O = IMP + diphosphate + H(+). It carries out the reaction dITP + H2O = dIMP + diphosphate + H(+). The enzyme catalyses XTP + H2O = XMP + diphosphate + H(+). Functionally, pyrophosphatase that hydrolyzes non-canonical purine nucleotides such as inosine triphosphate (ITP), deoxyinosine triphosphate (dITP) or xanthosine 5'-triphosphate (XTP) to their respective monophosphate derivatives. The enzyme does not distinguish between the deoxy- and ribose forms. Probably excludes non-canonical purines from RNA and DNA precursor pools, thus preventing their incorporation into RNA and DNA and avoiding chromosomal lesions. This Dictyostelium discoideum (Social amoeba) protein is Inosine triphosphate pyrophosphatase (itpa).